The sequence spans 915 residues: Metabotropic glutamate receptor 7 (915 aa).

The N-terminal stretch at 1–34 (MVQLGKLLRVLTLMKFPCCVLEVLLCVLAAAARG) is a signal peptide. The Extracellular portion of the chain corresponds to 35–590 (QEMYAPHSIR…IIKLEWHSPW (556 aa)). Cys-67 and Cys-109 are joined by a disulfide. Asn-98 is a glycosylation site (N-linked (GlcNAc...) asparagine). Residues Ser-159, 180-182 (AST), Tyr-230, and Asp-314 each bind L-glutamate. 7 disulfide bridges follow: Cys-249-Cys-541, Cys-374-Cys-390, Cys-430-Cys-437, Cys-523-Cys-542, Cys-527-Cys-545, Cys-548-Cys-560, and Cys-563-Cys-576. Residue Lys-407 coordinates L-glutamate. N-linked (GlcNAc...) asparagine glycosylation is found at Asn-458 and Asn-486. N-linked (GlcNAc...) asparagine glycosylation occurs at Asn-572. A helical transmembrane segment spans residues 591 to 615 (AVIPVFLAMLGIIATIFVMATFIRY). Residues 616–627 (NDTPIVRASGRE) lie on the Cytoplasmic side of the membrane. Residues 628 to 648 (LSYVLLTGIFLCYIITFLMIA) traverse the membrane as a helical segment. The Extracellular segment spans residues 649 to 654 (KPDVAV). Residues 655 to 675 (CSFRRVFLGLGMCISYAALLT) form a helical membrane-spanning segment. The Cytoplasmic portion of the chain corresponds to 676–702 (KTNRIYRIFEQGKKSVTAPRLISPTSQ). The chain crosses the membrane as a helical span at residues 703–723 (LAITSSLISVQLLGVFIWFGV). The Extracellular segment spans residues 724-753 (DPPNIIIDYDEHKTMNPEQARGVLKCDITD). Residues 754–775 (LQIICSLGYSILLMVTCTVYAI) form a helical membrane-spanning segment. At 776–788 (KTRGVPENFNEAK) the chain is on the cytoplasmic side. Residues 789–810 (PIGFTMYTTCIVWLAFIPIFFG) traverse the membrane as a helical segment. Topologically, residues 811 to 825 (TAQSAEKLYIQTTTL) are extracellular. The chain crosses the membrane as a helical span at residues 826-850 (TISMNLSASVALGMLYMPKVYIIIF). Residues 851–915 (HPELNVQKRK…KYVSYNNLVI (65 aa)) lie on the Cytoplasmic side of the membrane. A disordered region spans residues 874–895 (SRLSHKPSDRPNGEAKTELCEN). The segment covering 879–892 (KPSDRPNGEAKTEL) has biased composition (basic and acidic residues). Ser-900 carries the post-translational modification Phosphoserine.

Belongs to the G-protein coupled receptor 3 family. As to quaternary structure, homodimer. Interacts with PICK1. As to expression, widely distributed throughout the brain.

It is found in the cell membrane. In terms of biological role, G-protein coupled receptor activated by glutamate that regulates axon outgrowth through the MAPK-cAMP-PKA signaling pathway during neuronal development. Ligand binding causes a conformation change that triggers signaling via guanine nucleotide-binding proteins (G proteins) and modulates the activity of downstream effectors, such as adenylate cyclase that it inhibits. In Rattus norvegicus (Rat), this protein is Metabotropic glutamate receptor 7 (Grm7).